The following is a 211-amino-acid chain: Small ribosomal subunit protein uS5 (211 aa).

Residues 50–113 (LEDEVLDINM…DNAKINITRI (64 aa)) enclose the S5 DRBM domain.

Belongs to the universal ribosomal protein uS5 family. Part of the 30S ribosomal subunit. Contacts protein S4.

Its function is as follows. With S4 and S12 plays an important role in translational accuracy. The protein is Small ribosomal subunit protein uS5 of Methanococcoides burtonii (strain DSM 6242 / NBRC 107633 / OCM 468 / ACE-M).